A 689-amino-acid chain; its full sequence is Glycine--tRNA ligase beta subunit (689 aa).

It belongs to the class-II aminoacyl-tRNA synthetase family. In terms of assembly, tetramer of two alpha and two beta subunits.

It localises to the cytoplasm. It catalyses the reaction tRNA(Gly) + glycine + ATP = glycyl-tRNA(Gly) + AMP + diphosphate. This Sodalis glossinidius (strain morsitans) protein is Glycine--tRNA ligase beta subunit.